Consider the following 86-residue polypeptide: Exodeoxyribonuclease 7 small subunit (86 aa).

Residues Leu-67–Gly-86 are disordered.

It belongs to the XseB family. In terms of assembly, heterooligomer composed of large and small subunits.

The protein resides in the cytoplasm. It carries out the reaction Exonucleolytic cleavage in either 5'- to 3'- or 3'- to 5'-direction to yield nucleoside 5'-phosphates.. In terms of biological role, bidirectionally degrades single-stranded DNA into large acid-insoluble oligonucleotides, which are then degraded further into small acid-soluble oligonucleotides. This chain is Exodeoxyribonuclease 7 small subunit, found in Stenotrophomonas maltophilia (strain K279a).